Consider the following 166-residue polypeptide: MPDTAAPTPDRPGPDDPGRGRRLGVDVGTVRIGISSSDPDGILATPVETVSRDAKEDSDFRRIAELVEEMSVVEVVVGLPRNLREGTGSSARDAAGFARELGERIAPVPVRLVDERFTTTTAQRSLREAGVRSRQQRGIIDQAAAVAILQDWLEQRRRCGSEGDTP.

Positions 1–24 (MPDTAAPTPDRPGPDDPGRGRRLG) are disordered.

It belongs to the YqgF nuclease family.

The protein localises to the cytoplasm. Functionally, could be a nuclease involved in processing of the 5'-end of pre-16S rRNA. This Mycobacteroides abscessus (strain ATCC 19977 / DSM 44196 / CCUG 20993 / CIP 104536 / JCM 13569 / NCTC 13031 / TMC 1543 / L948) (Mycobacterium abscessus) protein is Putative pre-16S rRNA nuclease.